The sequence spans 396 residues: Flavohemoprotein (396 aa).

In terms of domain architecture, Globin spans 1–136; that stretch reads MLDAQTIATV…LANVFINREA (136 aa). Position 85 (His-85) interacts with heme b. Catalysis depends on charge relay system residues Tyr-95 and Glu-135. A reductase region spans residues 147–396; it reads GGWEGTRDFR…YECFGPHKVL (250 aa). The FAD-binding FR-type domain occupies 150 to 255; that stretch reads EGTRDFRIVA…VAPAGDFFMA (106 aa). FAD is bound by residues Tyr-188 and 204–207; that span reads RQYS. 268–273 contacts NADP(+); sequence GVGQTP. 389-392 provides a ligand contact to FAD; the sequence is CFGP.

It belongs to the globin family. Two-domain flavohemoproteins subfamily. The protein in the C-terminal section; belongs to the flavoprotein pyridine nucleotide cytochrome reductase family. As to quaternary structure, monomer. FAD is required as a cofactor. Requires heme b as cofactor.

The protein resides in the cytoplasm. The enzyme catalyses 2 nitric oxide + NADPH + 2 O2 = 2 nitrate + NADP(+) + H(+). It catalyses the reaction 2 nitric oxide + NADH + 2 O2 = 2 nitrate + NAD(+) + H(+). Is involved in NO detoxification in an aerobic process, termed nitric oxide dioxygenase (NOD) reaction that utilizes O(2) and NAD(P)H to convert NO to nitrate, which protects the bacterium from various noxious nitrogen compounds. Therefore, plays a central role in the inducible response to nitrosative stress. Its function is as follows. In the presence of oxygen and NADH, HMP has NADH oxidase activity, which leads to the generation of superoxide and H(2)O(2), both in vitro and in vivo, and it has been suggested that HMP might act as an amplifier of superoxide stress. Under anaerobic conditions, HMP also exhibits nitric oxide reductase and FAD reductase activities. However, all these reactions are much lower than NOD activity. Functionally, various electron acceptors are also reduced by HMP in vitro, including dihydropterine, ferrisiderophores, ferric citrate, cytochrome c, nitrite, S-nitrosoglutathione, and alkylhydroperoxides. However, it is unknown if these reactions are of any biological significance in vivo. This chain is Flavohemoprotein (hmp), found in Escherichia coli (strain K12).